The following is a 472-amino-acid chain: Glycine--tRNA ligase (472 aa).

Residues Arg109 and Glu174 each coordinate substrate. ATP contacts are provided by residues 206–208 (RNE), 216–221 (FRTREF), 293–294 (EL), and 337–340 (GLTR). 221-225 (FEQME) serves as a coordination point for substrate. Residue 333–337 (EPAAG) participates in substrate binding.

The protein belongs to the class-II aminoacyl-tRNA synthetase family. As to quaternary structure, homodimer.

The protein resides in the cytoplasm. The enzyme catalyses tRNA(Gly) + glycine + ATP = glycyl-tRNA(Gly) + AMP + diphosphate. Functionally, catalyzes the attachment of glycine to tRNA(Gly). The polypeptide is Glycine--tRNA ligase (Cutibacterium acnes (strain DSM 16379 / KPA171202) (Propionibacterium acnes)).